The following is a 218-amino-acid chain: Octanoyltransferase (218 aa).

A BPL/LPL catalytic domain is found at 31–206; that stretch reads REAADEVWLV…QLVKHLDYAE (176 aa). Residues 70–77, 137–139, and 150–152 each bind substrate; these read RGGQVTYH, SLG, and GLA. The active-site Acyl-thioester intermediate is Cys-168.

This sequence belongs to the LipB family.

The protein localises to the cytoplasm. The enzyme catalyses octanoyl-[ACP] + L-lysyl-[protein] = N(6)-octanoyl-L-lysyl-[protein] + holo-[ACP] + H(+). It participates in protein modification; protein lipoylation via endogenous pathway; protein N(6)-(lipoyl)lysine from octanoyl-[acyl-carrier-protein]: step 1/2. Functionally, catalyzes the transfer of endogenously produced octanoic acid from octanoyl-acyl-carrier-protein onto the lipoyl domains of lipoate-dependent enzymes. Lipoyl-ACP can also act as a substrate although octanoyl-ACP is likely to be the physiological substrate. In Pseudomonas syringae pv. syringae (strain B728a), this protein is Octanoyltransferase.